Consider the following 21-residue polypeptide: MGIIAGIIKVIKSLIEQFTGK.

Belongs to the phenol-soluble modulin alpha peptides family.

Its function is as follows. Peptide which can recruit, activate and subsequently lyse human neutrophils, thus eliminating the main cellular defense against infection. The protein is Phenol-soluble modulin alpha 1 peptide (psmA1) of Staphylococcus aureus (strain Mu3 / ATCC 700698).